A 1044-amino-acid chain; its full sequence is Spindle assembly checkpoint serine/threonine-protein kinase bub1 (1044 aa).

A BUB1 N-terminal domain is found at 36–204; it reads FQEELDIIEE…SSPFPPPRIV (169 aa). Disordered regions lie at residues 209-259, 317-343, 404-446, 484-555, and 685-705; these read PVSS…PLLY, VHHD…TPTR, ESLE…SQEE, KNSN…DSNS, and IKPK…SLDG. Polar residues predominate over residues 223-239; that stretch reads QVFSDASSSRDSQNASD. Positions 430–442 are enriched in polar residues; that stretch reads NSSNSGATSLTGR. Residues 504–518 are compositionally biased toward low complexity; sequence STLQEETATGTTSTT. Polar residues predominate over residues 544–555; that stretch reads RSPQYSTVDSNS. Thr550 is subject to Phosphothreonine. In terms of domain architecture, Protein kinase spans 718-1044; it reads LSVISKLGQG…LLKSIEKRKI (327 aa). Residues Ala728, Phe729, Ala730, Lys762, and Asp809 each contribute to the ATP site. The active-site Proton acceptor is Asp861. ATP is bound by residues Asp865, Asn866, and Asp900.

Belongs to the protein kinase superfamily. Ser/Thr protein kinase family. BUB1 subfamily. Part of the BUB1-BUB3 complex, composed of bub1 and bub3. Interacts with spc7 (when phosphorylated on MELT motifs); to recruit the bub1-bub3 complex to kinetochores. Interacts with mad3. Post-translationally, autophosphorylated.

The protein resides in the nucleus. Its subcellular location is the chromosome. It is found in the centromere. The protein localises to the kinetochore. It catalyses the reaction L-seryl-[protein] + ATP = O-phospho-L-seryl-[protein] + ADP + H(+). The catalysed reaction is L-threonyl-[protein] + ATP = O-phospho-L-threonyl-[protein] + ADP + H(+). In terms of biological role, involved in mitotic spindle assembly checkpoint signaling, a process that delays anaphase until chromosomes are bioriented on the spindle, and in the repair of incorrect mitotic kinetochore-spindle microtubule attachments. Acts as a kinetochore scaffold for the recruitment of other spindle assembly checkpoint components. In Schizosaccharomyces pombe (strain 972 / ATCC 24843) (Fission yeast), this protein is Spindle assembly checkpoint serine/threonine-protein kinase bub1.